Consider the following 341-residue polypeptide: Methionine import ATP-binding protein MetN (341 aa).

Residues 9–247 enclose the ABC transporter domain; sequence ISVQDVSKKL…SENSITNELF (239 aa). 41 to 48 contributes to the ATP binding site; that stretch reads GHSGSGKT.

Belongs to the ABC transporter superfamily. Methionine importer (TC 3.A.1.24) family. The complex is composed of two ATP-binding proteins (MetN), two transmembrane proteins (MetI) and a solute-binding protein (MetQ).

The protein resides in the cell inner membrane. It carries out the reaction L-methionine(out) + ATP + H2O = L-methionine(in) + ADP + phosphate + H(+). The enzyme catalyses D-methionine(out) + ATP + H2O = D-methionine(in) + ADP + phosphate + H(+). Part of the ABC transporter complex MetNIQ involved in methionine import. Responsible for energy coupling to the transport system. The protein is Methionine import ATP-binding protein MetN of Chlamydia pneumoniae (Chlamydophila pneumoniae).